The following is a 383-amino-acid chain: L-Ala-D/L-Glu epimerase (383 aa).

Substrate is bound by residues Arg-68, Tyr-94, and 198–200; that span reads KVK. The Mg(2+) site is built by Asp-224, Glu-251, and Asp-276. Residues Lys-298, 326-328, and 348-350 each bind substrate; these read CMT and DLD.

Belongs to the mandelate racemase/muconate lactonizing enzyme family. It depends on Mg(2+) as a cofactor.

It carries out the reaction L-alanyl-L-glutamate = L-alanyl-D-glutamate. Functionally, catalyzes the epimerization of L-Ala-D-Glu to L-Ala-L-Glu and may play a role in the metabolism of the murein peptide, of which L-Ala-D-Glu is a component. Is also able to catalyze the epimerization of L-Ala-D-Asp, L-Ala-L-Glu, L-Ala-L-Ser, L-Ala-L-Pro, L-Ala-L-L-Val, L-Ala-L-Thr, L-Ala-L-Leu, L-Ala-L-Ile and L-Gly-L-Glu (in vitro). The sequence is that of L-Ala-D/L-Glu epimerase from Bacteroides thetaiotaomicron (strain ATCC 29148 / DSM 2079 / JCM 5827 / CCUG 10774 / NCTC 10582 / VPI-5482 / E50).